The following is a 279-amino-acid chain: Energy-coupling factor transporter ATP-binding protein EcfA (279 aa).

An ABC transporter domain is found at 4-239; the sequence is VETKDLYFRY…VETIRKANLR (236 aa). 37-44 contacts ATP; it reads GPNGAGKS.

The protein belongs to the ABC transporter superfamily. Energy-coupling factor EcfA family. In terms of assembly, forms a stable energy-coupling factor (ECF) transporter complex composed of 2 membrane-embedded substrate-binding proteins (S component), 2 ATP-binding proteins (A component) and 2 transmembrane proteins (T component).

It is found in the cell membrane. In terms of biological role, ATP-binding (A) component of a common energy-coupling factor (ECF) ABC-transporter complex. Unlike classic ABC transporters this ECF transporter provides the energy necessary to transport a number of different substrates. The protein is Energy-coupling factor transporter ATP-binding protein EcfA of Methanocaldococcus jannaschii (strain ATCC 43067 / DSM 2661 / JAL-1 / JCM 10045 / NBRC 100440) (Methanococcus jannaschii).